Here is a 543-residue protein sequence, read N- to C-terminus: Cytochrome P450 2U1 (543 aa).

Helical transmembrane passes span 32 to 52, 58 to 78, 261 to 281, and 342 to 362; these read PTGGALLLLVLAALLGWSWLW, GIPPGPAPWPVVGNFGFVLLP, VCLNTQLLLVNICSWLYYLPF, and LFYIIGDLFIAGTDTTTNSLL. A heme-binding site is contributed by Cys490. Residues 495-515 traverse the membrane as a helical segment; that stretch reads LAKMELFLMFVSLMQSFTFVL.

This sequence belongs to the cytochrome P450 family. Heme is required as a cofactor.

It is found in the endoplasmic reticulum membrane. It localises to the microsome membrane. The protein localises to the mitochondrion inner membrane. It catalyses the reaction an omega-methyl-long-chain fatty acid + reduced [NADPH--hemoprotein reductase] + O2 = an omega-hydroxy-long-chain fatty acid + oxidized [NADPH--hemoprotein reductase] + H2O + H(+). The enzyme catalyses (5Z,8Z,11Z,14Z)-eicosatetraenoate + reduced [NADPH--hemoprotein reductase] + O2 = 19-hydroxy-(5Z,8Z,11Z,14Z)-eicosatetraenoate + oxidized [NADPH--hemoprotein reductase] + H2O + H(+). The catalysed reaction is (5Z,8Z,11Z,14Z)-eicosatetraenoate + reduced [NADPH--hemoprotein reductase] + O2 = 20-hydroxy-(5Z,8Z,11Z,14Z)-eicosatetraenoate + oxidized [NADPH--hemoprotein reductase] + H2O + H(+). It carries out the reaction N-[(5Z,8Z,11Z,14Z)-eicosatetraenoyl]-serotonin + reduced [NADPH--hemoprotein reductase] + O2 = 2-oxo-N-[(5Z,8Z,11Z,14Z)-eicosatetraenoyl]-serotonin + oxidized [NADPH--hemoprotein reductase] + H2O + H(+). A cytochrome P450 monooxygenase involved in the metabolism of arachidonic acid and its conjugates. Mechanistically, uses molecular oxygen inserting one oxygen atom into a substrate, and reducing the second into a water molecule, with two electrons provided by NADPH via cytochrome P450 reductase (CPR; NADPH-ferrihemoprotein reductase). Acts as an omega and omega-1 hydroxylase for arachidonic acid and possibly for other long chain fatty acids. May modulate the arachidonic acid signaling pathway and play a role in other fatty acid signaling processes. May down-regulate the biological activities of N-arachidonoyl-serotonin, an endocannabinoid that has anti-nociceptive effects through inhibition of fatty acid amide hydrolase FAAH, TRPV1 receptor and T-type calcium channels. Catalyzes C-2 oxidation of the indole ring of N-arachidonoyl-serotonin forming a less active product 2-oxo-N-arachidonoyl-serotonin. In Bos taurus (Bovine), this protein is Cytochrome P450 2U1 (CYP2U1).